A 299-amino-acid polypeptide reads, in one-letter code: 4-hydroxy-tetrahydrodipicolinate synthase (299 aa).

Residue Thr-44 participates in pyruvate binding. The Proton donor/acceptor role is filled by Tyr-133. The Schiff-base intermediate with substrate role is filled by Lys-162. Residue Ile-204 coordinates pyruvate.

The protein belongs to the DapA family. In terms of assembly, homotetramer; dimer of dimers.

Its subcellular location is the cytoplasm. The enzyme catalyses L-aspartate 4-semialdehyde + pyruvate = (2S,4S)-4-hydroxy-2,3,4,5-tetrahydrodipicolinate + H2O + H(+). Its pathway is amino-acid biosynthesis; L-lysine biosynthesis via DAP pathway; (S)-tetrahydrodipicolinate from L-aspartate: step 3/4. Functionally, catalyzes the condensation of (S)-aspartate-beta-semialdehyde [(S)-ASA] and pyruvate to 4-hydroxy-tetrahydrodipicolinate (HTPA). This Thermus thermophilus (strain ATCC 27634 / DSM 579 / HB8) protein is 4-hydroxy-tetrahydrodipicolinate synthase.